The primary structure comprises 198 residues: Charged multivesicular body protein 1a (198 aa).

Coiled-coil stretches lie at residues 7–41 and 176–198; these read QLKF…QQKN and GETS…ALRN. Residues 171 to 198 form a disordered region; sequence GASALGETSARAQEKEDQLSRRLAALRN. Positions 187–197 match the MIT-interacting motif motif; that stretch reads DQLSRRLAALR.

It belongs to the SNF7 family. As to quaternary structure, probable peripherally associated component of the endosomal sorting required for transport complex III (ESCRT-III).

The protein resides in the cytoplasm. It localises to the endosome membrane. Functionally, probable peripherally associated component of the endosomal sorting required for transport complex III (ESCRT-III) which is involved in multivesicular bodies (MVBs) formation and sorting of endosomal cargo proteins into MVBs. MVBs contain intraluminal vesicles (ILVs) that are generated by invagination and scission from the limiting membrane of the endosome and mostly are delivered to lysosomes enabling degradation of membrane proteins, such as stimulated growth factor receptors, lysosomal enzymes and lipids. The polypeptide is Charged multivesicular body protein 1a (chmp1a) (Danio rerio (Zebrafish)).